We begin with the raw amino-acid sequence, 68 residues long: Adipokinetic prohormone type 1 (68 aa).

An N-terminal signal peptide occupies residues 1-20 (MNYVSIFVLIVACLCVLADA). At Gln21 the chain carries Pyrrolidone carboxylic acid. A Glycine amide modification is found at Gly30. Positions 34 to 68 (GAVAATMSCRSEETIAAIYKLIQNEAERLLLCQKP) are excised as a propeptide.

As to expression, expressed in antennal lobe (AL), corpora cardiaca (CC), corpora allata (CA) and gnathal ganglion (GNG) (at protein level). Expression in CC and CA detected in all animals, expression in GNG in some animals and in AL in few animals (at protein level).

It is found in the secreted. This hormone, released from cells in the corpora cardiaca, causes release of diglycerides from the fat body and stimulation of muscles to use these diglycerides as an energy source during energy-demanding processes. The sequence is that of Adipokinetic prohormone type 1 from Agrotis ipsilon (Black cutworm moth).